The primary structure comprises 255 residues: Very-long-chain (3R)-3-hydroxyacyl-CoA dehydratase 2 (255 aa).

Residues 3–42 (AAAAATAAAKGNGGGGGRAGAGDASGTRKKKGPGPLATAY) are Cytoplasmic-facing. The segment at 11-34 (AKGNGGGGGRAGAGDASGTRKKKG) is disordered. Residues 13–22 (GNGGGGGRAG) are compositionally biased toward gly residues. Residues 43–61 (LVIYNVVMTAGWLVIAVGL) form a helical membrane-spanning segment. The Lumenal segment spans residues 62–80 (VRAYLAKGSYHSLYYSIEK). Residues 81 to 98 (PLKFFQTGALLEILHCAI) form a helical membrane-spanning segment. The Cytoplasmic portion of the chain corresponds to 99-108 (GIVPSSVVLT). Residues 109 to 126 (SFQVMSRVFLIWAVTHSV) form a helical membrane-spanning segment. Over 127–131 (KEVQS) the chain is Lumenal. A helical transmembrane segment spans residues 132-147 (EDSVLLFVIAWTITEI). At 148–170 (IRYSFYTFSLLNHLPYLIKWARY) the chain is on the cytoplasmic side. Residues 171-188 (TLFIVLYPMGVSGELLTI) form a helical membrane-spanning segment. Catalysis depends on residues tyrosine 177 and glutamate 184. Over 189–218 (YAALPFVRQAGLYSISLPNKYNFSFDYYAF) the chain is Lumenal. The segment at 199–215 (GLYSISLPNKYNFSFDY) is may be involved in interaction with TECR. The N-linked (GlcNAc...) asparagine glycan is linked to asparagine 210. A helical transmembrane segment spans residues 219–236 (LILIMISYIPIFPQLYFH). The Cytoplasmic segment spans residues 237–255 (MIHQRRKILSHTEEHKKFE).

This sequence belongs to the very long-chain fatty acids dehydratase HACD family. As to quaternary structure, may interact with enzymes of the ELO family (including ELOVL1); with those enzymes that mediate condensation, the first of the four steps of the reaction cycle responsible for fatty acids elongation, may be part of a larger fatty acids elongase complex. Interacts with BCAP31. Interacts (via the third lumenal loop) with TECR.

It localises to the endoplasmic reticulum membrane. The enzyme catalyses a very-long-chain (3R)-3-hydroxyacyl-CoA = a very-long-chain (2E)-enoyl-CoA + H2O. The catalysed reaction is (3R)-hydroxyhexadecanoyl-CoA = (2E)-hexadecenoyl-CoA + H2O. It catalyses the reaction (3R)-hydroxyoctadecanoyl-CoA = (2E)-octadecenoyl-CoA + H2O. It carries out the reaction (3R)-hydroxyeicosanoyl-CoA = (2E)-eicosenoyl-CoA + H2O. The enzyme catalyses (3R)-hydroxydocosanoyl-CoA = (2E)-docosenoyl-CoA + H2O. The catalysed reaction is (3R)-hydroxytetracosanoyl-CoA = (2E)-tetracosenoyl-CoA + H2O. It catalyses the reaction (3R)-hydroxyhexacosanoyl-CoA = (2E)-hexacosenoyl-CoA + H2O. It functions in the pathway lipid metabolism; fatty acid biosynthesis. In terms of biological role, catalyzes the third of the very long-chain fatty acids (VLCFA) elongation four-step cycle (condensation, reduction, dehydration, and reduction). This endoplasmic reticulum-elongation process is characterized by the addition of two carbons to the lipid chain through each cycle. This enzyme catalyzes the dehydration of the 3-hydroxyacyl-CoA intermediate into trans-2,3-enoyl-CoA, within each cycle of elongation. Therefore, it participates in the production of various VLCFAs involved in multiple biological processes as precursors of membrane lipids and lipid mediators. This chain is Very-long-chain (3R)-3-hydroxyacyl-CoA dehydratase 2, found in Pongo abelii (Sumatran orangutan).